The following is a 316-amino-acid chain: 4-hydroxy-3-methylbut-2-enyl diphosphate reductase (316 aa).

C12 provides a ligand contact to [4Fe-4S] cluster. The (2E)-4-hydroxy-3-methylbut-2-enyl diphosphate site is built by H41 and H74. The dimethylallyl diphosphate site is built by H41 and H74. Positions 41 and 74 each coordinate isopentenyl diphosphate. Residue C96 participates in [4Fe-4S] cluster binding. H124 contacts (2E)-4-hydroxy-3-methylbut-2-enyl diphosphate. A dimethylallyl diphosphate-binding site is contributed by H124. H124 provides a ligand contact to isopentenyl diphosphate. E126 acts as the Proton donor in catalysis. T167 contacts (2E)-4-hydroxy-3-methylbut-2-enyl diphosphate. C197 contributes to the [4Fe-4S] cluster binding site. S225, S226, N227, and S269 together coordinate (2E)-4-hydroxy-3-methylbut-2-enyl diphosphate. Positions 225, 226, 227, and 269 each coordinate dimethylallyl diphosphate. Residues S225, S226, N227, and S269 each contribute to the isopentenyl diphosphate site.

Belongs to the IspH family. As to quaternary structure, homodimer. [4Fe-4S] cluster is required as a cofactor.

It catalyses the reaction isopentenyl diphosphate + 2 oxidized [2Fe-2S]-[ferredoxin] + H2O = (2E)-4-hydroxy-3-methylbut-2-enyl diphosphate + 2 reduced [2Fe-2S]-[ferredoxin] + 2 H(+). The enzyme catalyses dimethylallyl diphosphate + 2 oxidized [2Fe-2S]-[ferredoxin] + H2O = (2E)-4-hydroxy-3-methylbut-2-enyl diphosphate + 2 reduced [2Fe-2S]-[ferredoxin] + 2 H(+). It participates in isoprenoid biosynthesis; dimethylallyl diphosphate biosynthesis; dimethylallyl diphosphate from (2E)-4-hydroxy-3-methylbutenyl diphosphate: step 1/1. It functions in the pathway isoprenoid biosynthesis; isopentenyl diphosphate biosynthesis via DXP pathway; isopentenyl diphosphate from 1-deoxy-D-xylulose 5-phosphate: step 6/6. In terms of biological role, catalyzes the conversion of 1-hydroxy-2-methyl-2-(E)-butenyl 4-diphosphate (HMBPP) into a mixture of isopentenyl diphosphate (IPP) and dimethylallyl diphosphate (DMAPP). Acts in the terminal step of the DOXP/MEP pathway for isoprenoid precursor biosynthesis. This Salmonella typhi protein is 4-hydroxy-3-methylbut-2-enyl diphosphate reductase.